Here is a 610-residue protein sequence, read N- to C-terminus: Aspercryptin biosynthesis cluster-specific transcription regulator atnN (610 aa).

The span at 1–26 (MAPKDSQVSASNEMTGNPPSSVQGRS) shows a compositional bias: polar residues. The segment at 1–27 (MAPKDSQVSASNEMTGNPPSSVQGRSR) is disordered. The zn(2)-C6 fungal-type DNA-binding region spans 30–57 (CITCRIRRVKCDEERPHCRRCQSTGRKC). Disordered regions lie at residues 61–81 (TPLT…KAGS) and 427–493 (AGST…LPRP). 2 stretches are compositionally biased toward low complexity: residues 66 to 79 (QQPK…AAKA) and 437 to 474 (SRAG…TPTP).

It is found in the nucleus. Functionally, transcription factor that positively regulates the cluster that mediate the production of aspercryptins, linear lipopeptides built from six amino acids including 2 highly unusual and nonproteogenic amino acids, 2-amino-octanoic acid (2aoa) and 2-amino-dodecanol (2adol). In Emericella nidulans (strain FGSC A4 / ATCC 38163 / CBS 112.46 / NRRL 194 / M139) (Aspergillus nidulans), this protein is Aspercryptin biosynthesis cluster-specific transcription regulator atnN.